We begin with the raw amino-acid sequence, 987 residues long: Ephrin type-B receptor 4a (987 aa).

The N-terminal stretch at 1 to 24 (MELFSRNVAAFWIILLEFLLGSVA) is a signal peptide. The Extracellular segment spans residues 25 to 548 (EEEVLMNTKT…DSSSPLLVTG (524 aa)). Residues 26–205 (EEVLMNTKTE…FFKKCPALTR (180 aa)) form the Eph LBD domain. Disulfide bonds link Cys70-Cys187 and Cys104-Cys114. The segment at 319–340 (DSADTPCTRPPSSPRSPVPQVN) is disordered. Pro residues predominate over residues 326–335 (TRPPSSPRSP). Fibronectin type-III domains are found at residues 328–438 (PPSS…TSPN) and 442–536 (LVSG…TLPD). Residues 549-569 (ILIAMGMLLLIIVIGAAIYCI) form a helical membrane-spanning segment. The Cytoplasmic segment spans residues 570-987 (RKQNNYKDPE…QNKAPGNVLY (418 aa)). One can recognise a Protein kinase domain in the interval 621–884 (VKIEEVIGAG…NIVSALDKLI (264 aa)). ATP-binding positions include 627-635 (IGAGEFGEV) and Lys653. The active-site Proton acceptor is the Asp746. The region spanning 914–978 (SSCGTVGDWL…LSSIEALGIQ (65 aa)) is the SAM domain.

It belongs to the protein kinase superfamily. Tyr protein kinase family. Ephrin receptor subfamily.

Its subcellular location is the cell membrane. It carries out the reaction L-tyrosyl-[protein] + ATP = O-phospho-L-tyrosyl-[protein] + ADP + H(+). Functionally, receptor tyrosine kinase which binds promiscuously transmembrane ephrin-B family ligands residing on adjacent cells, leading to contact-dependent bidirectional signaling into neighboring cells. The signaling pathway downstream of the receptor is referred to as forward signaling while the signaling pathway downstream of the ephrin ligand is referred to as reverse signaling. Together with its cognate ligand/functional ligand EFNB2 is involved in the regulation of cell adhesion and cell migration, and plays a central role in heart morphogenesis, angiogenesis and blood vessel remodeling and permeability. EPHB4-mediated forward signaling controls cellular repulsion and segregation from EFNB2-expressing cells. Involved in somitogenesis. In Danio rerio (Zebrafish), this protein is Ephrin type-B receptor 4a.